The primary structure comprises 253 residues: MEDEIRKAAEILAKSKHAVVFTGAGISAESGIPTFRGEDGLWRKYDPEEVASISGFKRNPRAFWEFSMEMKDKLFAEPNPAHYAIAELERMGIVKAVITQNIDMLHQRAGSRRVLELHGSMDKLDCLDCHETYDWSEFVEDFNKGEIPRCRKCGSYYVKPRVVLFGEPLPQRTLFEAIEEAKHCDAFMVVGSSLVVYPAAELPYIAKKAGAKMIIVNAEPTMADPIFDVKIIGKAGEVLPKIVEEVKRLRSEK.

In terms of domain architecture, Deacetylase sirtuin-type spans 1–252; sequence MEDEIRKAAE…VEEVKRLRSE (252 aa). Residues 23 to 42 and 100 to 103 each bind NAD(+); these read GAGI…DGLW and QNID. The active-site Proton acceptor is histidine 118. Residues cysteine 126, cysteine 129, cysteine 150, and cysteine 153 each contribute to the Zn(2+) site. NAD(+)-binding positions include 191-193, 217-219, and alanine 235; these read GSS and NAE.

It belongs to the sirtuin family. Class III subfamily. Zn(2+) serves as cofactor.

It is found in the cytoplasm. The catalysed reaction is N(6)-acetyl-L-lysyl-[protein] + NAD(+) + H2O = 2''-O-acetyl-ADP-D-ribose + nicotinamide + L-lysyl-[protein]. Its function is as follows. NAD-dependent protein deacetylase which modulates the activities of several proteins which are inactive in their acetylated form. Deacetylates the N-terminal lysine residue of Alba, the major archaeal chromatin protein and that, in turn, increases Alba's DNA binding affinity, thereby repressing transcription. This Archaeoglobus fulgidus (strain ATCC 49558 / DSM 4304 / JCM 9628 / NBRC 100126 / VC-16) protein is NAD-dependent protein deacylase 2.